The following is a 300-amino-acid chain: Ribosomal protein L11 methyltransferase (300 aa).

Residues threonine 152, glycine 173, aspartate 195, and asparagine 234 each contribute to the S-adenosyl-L-methionine site.

This sequence belongs to the methyltransferase superfamily. PrmA family.

The protein localises to the cytoplasm. It carries out the reaction L-lysyl-[protein] + 3 S-adenosyl-L-methionine = N(6),N(6),N(6)-trimethyl-L-lysyl-[protein] + 3 S-adenosyl-L-homocysteine + 3 H(+). Methylates ribosomal protein L11. This Burkholderia ambifaria (strain MC40-6) protein is Ribosomal protein L11 methyltransferase.